Reading from the N-terminus, the 238-residue chain is MRPAGRSANQVRPVTLTRNYTKHAEGSVLVEFGDTKVLCTASIDEGVPRFLKGQGQGWITAEYGMLPRSTHTRNAREAAKGKQGGRTMEIQRLIARALRAAVDLKALGEFTITLDCDVLQADGGTRTASITGACVALADALNKLVAAGKLKTNPMKGMVAAVSVGIVNGEAICDLEYIEDSAAETDMNVVMTEDGRIIEVQGTAEGEPFTHEELLTLLALARGGIESIITTQKAALEN.

Phosphate-binding positions include R86 and G124–R126.

It belongs to the RNase PH family. Homohexameric ring arranged as a trimer of dimers.

The enzyme catalyses tRNA(n+1) + phosphate = tRNA(n) + a ribonucleoside 5'-diphosphate. Phosphorolytic 3'-5' exoribonuclease that plays an important role in tRNA 3'-end maturation. Removes nucleotide residues following the 3'-CCA terminus of tRNAs; can also add nucleotides to the ends of RNA molecules by using nucleoside diphosphates as substrates, but this may not be physiologically important. Probably plays a role in initiation of 16S rRNA degradation (leading to ribosome degradation) during starvation. The protein is Ribonuclease PH of Klebsiella pneumoniae (strain 342).